A 952-amino-acid chain; its full sequence is Serine/threonine-protein kinase atg1 (952 aa).

In terms of domain architecture, Protein kinase spans Phe-23 to Val-329. ATP is bound by residues Ile-29–Val-37 and Lys-52. Asp-166 functions as the Proton acceptor in the catalytic mechanism. Disordered stretches follow at residues Glu-331–Gln-478, Gly-510–Ser-573, Arg-783–Ser-806, and Ala-920–Lys-952. Basic and acidic residues-rich tracts occupy residues Gly-338–Pro-347 and Ser-356–Thr-372. Polar residues predominate over residues Ser-386–Phe-398. Residues Pro-429–Glu-439 are compositionally biased toward basic and acidic residues. Composition is skewed to polar residues over residues Ala-459–Glu-475, Pro-553–Ser-573, and Asn-793–Ser-806. Positions Ser-933–Lys-952 are enriched in low complexity.

The protein belongs to the protein kinase superfamily. Ser/Thr protein kinase family. APG1/unc-51/ULK1 subfamily. In terms of assembly, homodimer. Forms a ternary complex with ATG13 and ATG17.

Its subcellular location is the cytoplasm. It is found in the preautophagosomal structure membrane. The enzyme catalyses L-seryl-[protein] + ATP = O-phospho-L-seryl-[protein] + ADP + H(+). The catalysed reaction is L-threonyl-[protein] + ATP = O-phospho-L-threonyl-[protein] + ADP + H(+). Its function is as follows. Serine/threonine protein kinase involved in the cytoplasm to vacuole transport (Cvt) and found to be essential in autophagy, where it is required for the formation of autophagosomes. Involved in the clearance of protein aggregates which cannot be efficiently cleared by the proteasome. Required for selective autophagic degradation of the nucleus (nucleophagy) as well as for mitophagy which contributes to regulate mitochondrial quantity and quality by eliminating the mitochondria to a basal level to fulfill cellular energy requirements and preventing excess ROS production. Also involved in endoplasmic reticulum-specific autophagic process, in selective removal of ER-associated degradation (ERAD) substrates. Plays a key role in ATG9 and ATG23 cycling through the pre-autophagosomal structure and is necessary to promote ATG18 binding to ATG9 through phosphorylation of ATG9. Catalyzes phosphorylation of ATG4, decreasing the interaction between ATG4 and ATG8 and impairing deconjugation of PE-conjugated forms of ATG8. The sequence is that of Serine/threonine-protein kinase atg1 from Botryotinia fuckeliana (strain B05.10) (Noble rot fungus).